Here is a 434-residue protein sequence, read N- to C-terminus: Nucleobase transporter PlUacP (434 aa).

12 consecutive transmembrane segments (helical) span residues 9–29 (LGFQ…LIVG), 39–59 (LAYL…LQVW), 63–83 (FFGI…GPMI), 93–113 (AIYG…GFFG), 118–138 (FFPP…LIPV), 159–179 (ALSF…TGFI), 181–201 (AISI…MGKV), 218–238 (FYFG…LVAI), 306–326 (VVIT…IAAL), 327–347 (TLLI…GMVV), 365–385 (LLII…PNLF), and 394–414 (ILTS…NFLF).

It belongs to the nucleobase:cation symporter-2 (NCS2) (TC 2.A.40) family.

It localises to the cell membrane. Its activity is regulated as follows. Inhibited by the proton gradient disruptor carbonyl cyanide m-chlorophenylhydrazone (CCCP), but not by the sodium gradient disruptor ouabain. Hypoxanthine, xanthine, cytosine and uric acid act as competitive inhibitors. Its function is as follows. Uptake of the purines adenine and guanine, and the pyrimidine uracil. Transport is probably proton-dependent. This Paenibacillus larvae subsp. larvae (strain NRRL B-3650 / LMG 16245) protein is Nucleobase transporter PlUacP.